A 282-amino-acid chain; its full sequence is Biotin synthase (282 aa).

The Radical SAM core domain maps to 1–228; sequence MQEIFLCSIS…NARLMAAGGR (228 aa). [4Fe-4S] cluster contacts are provided by Cys-17, Cys-21, and Cys-24. [2Fe-2S] cluster-binding residues include Cys-61, Cys-96, Cys-154, and Arg-221.

The protein belongs to the radical SAM superfamily. Biotin synthase family. In terms of assembly, homodimer. [4Fe-4S] cluster serves as cofactor. [2Fe-2S] cluster is required as a cofactor.

It catalyses the reaction (4R,5S)-dethiobiotin + (sulfur carrier)-SH + 2 reduced [2Fe-2S]-[ferredoxin] + 2 S-adenosyl-L-methionine = (sulfur carrier)-H + biotin + 2 5'-deoxyadenosine + 2 L-methionine + 2 oxidized [2Fe-2S]-[ferredoxin]. Its pathway is cofactor biosynthesis; biotin biosynthesis; biotin from 7,8-diaminononanoate: step 2/2. In terms of biological role, catalyzes the conversion of dethiobiotin (DTB) to biotin by the insertion of a sulfur atom into dethiobiotin via a radical-based mechanism. This is Biotin synthase from Helicobacter acinonychis (strain Sheeba).